The sequence spans 143 residues: Transcriptional regulator MraZ (143 aa).

SpoVT-AbrB domains lie at 5–47 and 76–119; these read EYEH…PMPV and ASDL…SAER.

The protein belongs to the MraZ family. In terms of assembly, forms oligomers.

The protein resides in the cytoplasm. It is found in the nucleoid. The chain is Transcriptional regulator MraZ from Herpetosiphon aurantiacus (strain ATCC 23779 / DSM 785 / 114-95).